Consider the following 741-residue polypeptide: Eukaryotic translation initiation factor 3 subunit B (741 aa).

A compositionally biased stretch (polar residues) spans 1 to 10 (MAPSFDTLSE). Residues 1-22 (MAPSFDTLSEQDLHEEEEEEID) form a disordered region. Positions 13-22 (LHEEEEEEID) are enriched in acidic residues. Positions 40–126 (TFVVIDGLPV…HTLLVNKLMD (87 aa)) constitute an RRM domain. WD repeat units lie at residues 193–230 (AHWT…KQKQ), 232–289 (PHPF…RSFV), 303–344 (QPKK…LLGK), 514–557 (IEKK…EKPE), and 572–610 (LEHY…HTFS). Residues 695-722 (KDAYGLPEDVDDPKKAKDAPAVTSEQGE) form a disordered region.

Belongs to the eIF-3 subunit B family. Component of the eukaryotic translation initiation factor 3 (eIF-3) complex.

It localises to the cytoplasm. RNA-binding component of the eukaryotic translation initiation factor 3 (eIF-3) complex, which is involved in protein synthesis of a specialized repertoire of mRNAs and, together with other initiation factors, stimulates binding of mRNA and methionyl-tRNAi to the 40S ribosome. The eIF-3 complex specifically targets and initiates translation of a subset of mRNAs involved in cell proliferation. This is Eukaryotic translation initiation factor 3 subunit B (prt1) from Aspergillus clavatus (strain ATCC 1007 / CBS 513.65 / DSM 816 / NCTC 3887 / NRRL 1 / QM 1276 / 107).